A 100-amino-acid polypeptide reads, in one-letter code: NADH-quinone oxidoreductase subunit K (100 aa).

Transmembrane regions (helical) follow at residues 4–24 (LSHG…GMII), 28–48 (LLFM…AFVV), and 60–80 (VMYI…LALL).

This sequence belongs to the complex I subunit 4L family. In terms of assembly, NDH-1 is composed of 13 different subunits. Subunits NuoA, H, J, K, L, M, N constitute the membrane sector of the complex.

Its subcellular location is the cell inner membrane. It catalyses the reaction a quinone + NADH + 5 H(+)(in) = a quinol + NAD(+) + 4 H(+)(out). In terms of biological role, NDH-1 shuttles electrons from NADH, via FMN and iron-sulfur (Fe-S) centers, to quinones in the respiratory chain. The immediate electron acceptor for the enzyme in this species is believed to be ubiquinone. Couples the redox reaction to proton translocation (for every two electrons transferred, four hydrogen ions are translocated across the cytoplasmic membrane), and thus conserves the redox energy in a proton gradient. The polypeptide is NADH-quinone oxidoreductase subunit K (Sodalis glossinidius (strain morsitans)).